A 708-amino-acid polypeptide reads, in one-letter code: Polyribonucleotide nucleotidyltransferase (708 aa).

The Mg(2+) site is built by aspartate 486 and aspartate 492. The KH domain maps to 553-612; sequence PRITTIKVPPQKVREVIGSGGKVIREITEVTGTKIDIEDDGTIKIASADAEATQRAVDWI. The region spanning 622–690 is the S1 motif domain; it reads GVVYTGKVVK…DRGKIKLSMK (69 aa).

This sequence belongs to the polyribonucleotide nucleotidyltransferase family. It depends on Mg(2+) as a cofactor.

The protein localises to the cytoplasm. It carries out the reaction RNA(n+1) + phosphate = RNA(n) + a ribonucleoside 5'-diphosphate. In terms of biological role, involved in mRNA degradation. Catalyzes the phosphorolysis of single-stranded polyribonucleotides processively in the 3'- to 5'-direction. This is Polyribonucleotide nucleotidyltransferase from Rhodospirillum rubrum (strain ATCC 11170 / ATH 1.1.1 / DSM 467 / LMG 4362 / NCIMB 8255 / S1).